Here is a 383-residue protein sequence, read N- to C-terminus: MSPNPSNSLDAFAGEKLAGLEASALRRRLAVTARGPEAAAERGGRSLVSFSCNDYLGLAHDPRVIAAATEALARYGAGAGASRLVTGNSPPLAALEERLARHKGKEAALVFGSGYLANLGIAPALVGAGDLILIDELGHSCLFAGAAMSRAQTVRFAHNDVAQLRALLAEHRGTARRALILTERVFSMDGDRAPLPEILALAGEYDAWTLVDDAHGLGVVEPGQRAPLEMGTLSKTLGSYGGYLCASQPVIDLLTSRARSLVYTTGLPPASAAAALKALDIVETEPERAARPLALARRFTARLGLPEAMSPIVPVLIGAAEAALALSTALEARGFLVVAIRPPTVAPGTARLRVAFSAAHDEGQVDALAEALIELAPESVRAG.

Positions 27 and 34 each coordinate substrate. Residue 114 to 115 (GY) participates in pyridoxal 5'-phosphate binding. His-139 serves as a coordination point for substrate. Residues Ser-187, 212-215 (DDAH), and 232-235 (TLSK) contribute to the pyridoxal 5'-phosphate site. Lys-235 is subject to N6-(pyridoxal phosphate)lysine. Thr-344 provides a ligand contact to substrate.

Belongs to the class-II pyridoxal-phosphate-dependent aminotransferase family. BioF subfamily. In terms of assembly, homodimer. The cofactor is pyridoxal 5'-phosphate.

It catalyses the reaction 6-carboxyhexanoyl-[ACP] + L-alanine + H(+) = (8S)-8-amino-7-oxononanoate + holo-[ACP] + CO2. It participates in cofactor biosynthesis; biotin biosynthesis. Its function is as follows. Catalyzes the decarboxylative condensation of pimeloyl-[acyl-carrier protein] and L-alanine to produce 8-amino-7-oxononanoate (AON), [acyl-carrier protein], and carbon dioxide. The polypeptide is 8-amino-7-oxononanoate synthase (Methylorubrum extorquens (strain CM4 / NCIMB 13688) (Methylobacterium extorquens)).